Consider the following 569-residue polypeptide: GATOR1 complex protein NPRL3 (569 aa).

2 disordered regions span residues 27–60 and 441–476; these read PFQR…DQDG and TPNA…SGDS. 2 stretches are compositionally biased toward polar residues: residues 34-52 and 441-468; these read HPAS…NNTG and TPNA…NSSA. A Phosphoserine modification is found at serine 476.

The protein belongs to the NPR3 family. As to quaternary structure, within the GATOR complex, component of the GATOR1 subcomplex, made of DEPDC5, NPRL2 and NPRL3. GATOR1 mediates the strong interaction of the GATOR complex with small GTPases Rag (RagA/RRAGA, RagB/RRAGB, RagC/RRAGC and/or RagD/RRAGD) heterodimers. GATOR1 interacts with GPR155/LYCHOS; interaction takes place in presence of cholesterol and prevents interaction between GATOR1 and KICSTOR.

Its subcellular location is the lysosome membrane. Its function is as follows. As a component of the GATOR1 complex functions as an inhibitor of the amino acid-sensing branch of the mTORC1 pathway. In response to amino acid depletion, the GATOR1 complex has GTPase activating protein (GAP) activity and strongly increases GTP hydrolysis by RagA/RRAGA (or RagB/RRAGB) within heterodimeric Rag complexes, thereby turning them into their inactive GDP-bound form, releasing mTORC1 from lysosomal surface and inhibiting mTORC1 signaling. In the presence of abundant amino acids, the GATOR1 complex is negatively regulated by GATOR2, the other GATOR subcomplex, in this amino acid-sensing branch of the TORC1 pathway. This Mus musculus (Mouse) protein is GATOR1 complex protein NPRL3.